Reading from the N-terminus, the 225-residue chain is Cytidylate kinase (225 aa).

An ATP-binding site is contributed by 11–19; it reads GPSGAGKGT.

The protein belongs to the cytidylate kinase family. Type 1 subfamily.

The protein localises to the cytoplasm. The enzyme catalyses CMP + ATP = CDP + ADP. The catalysed reaction is dCMP + ATP = dCDP + ADP. The protein is Cytidylate kinase of Mannheimia succiniciproducens (strain KCTC 0769BP / MBEL55E).